Here is a 255-residue protein sequence, read N- to C-terminus: Envelope glycoprotein E (255 aa).

Residues 1-110 lie on the Virion surface side of the membrane; the sequence is GSTWPSRCHS…QELGAWTRHY (110 aa). A helical transmembrane segment spans residues 111-131; it reads LAFLLIIICTCAALLIALVVW. Topologically, residues 132 to 255 are intravirion; the sequence is GCILYIRSNR…VASKLRSILK (124 aa). Positions 154–157 match the Internalization motif motif; that stretch reads YTSV. An acidic region spans residues 173-187; that stretch reads ASDSDDSFDSSSDEE. The segment covering 176–189 has biased composition (acidic residues); the sequence is SDDSFDSSSDEELE. 2 disordered regions span residues 176–210 and 223–245; these read SDDS…SADA and DTPE…DYSK.

Belongs to the alphaherpesvirinae glycoprotein E family. As to quaternary structure, interacts with gI. Phosphorylated on serines within the acidic cluster. Phosphorylation determines whether endocytosed viral gE traffics to the trans-Golgi network or recycles to the cell membrane.

The protein resides in the virion membrane. Its subcellular location is the host cell membrane. It localises to the host cell junction. It is found in the host Golgi apparatus membrane. The protein localises to the host endosome membrane. Its function is as follows. In epithelial cells, the heterodimer gE/gI is required for the cell-to-cell spread of the virus, by sorting nascent virions to cell junctions. Once the virus reaches the cell junctions, virus particles can spread to adjacent cells extremely rapidly through interactions with cellular receptors that accumulate at these junctions. Implicated in basolateral spread in polarized cells. In neuronal cells, gE/gI is essential for the anterograde spread of the infection throughout the host nervous system. Together with US9, the heterodimer gE/gI is involved in the sorting and transport of viral structural components toward axon tips. The polypeptide is Envelope glycoprotein E (gE) (Equus caballus (Horse)).